The chain runs to 208 residues: Pyridoxine/pyridoxamine 5'-phosphate oxidase (208 aa).

FMN-binding positions include 55–60, 70–71, Lys-77, and Gln-99; these read RMVLLK and YT. Lys-60 contacts substrate. Substrate is bound by residues Tyr-117, Arg-121, and Ser-125. FMN contacts are provided by residues 134–135 and Trp-180; that span reads QS. 186 to 188 lines the substrate pocket; sequence RIH. Residue Arg-190 coordinates FMN.

It belongs to the pyridoxamine 5'-phosphate oxidase family. In terms of assembly, homodimer. Requires FMN as cofactor.

The enzyme catalyses pyridoxamine 5'-phosphate + O2 + H2O = pyridoxal 5'-phosphate + H2O2 + NH4(+). It carries out the reaction pyridoxine 5'-phosphate + O2 = pyridoxal 5'-phosphate + H2O2. Its pathway is cofactor metabolism; pyridoxal 5'-phosphate salvage; pyridoxal 5'-phosphate from pyridoxamine 5'-phosphate: step 1/1. It functions in the pathway cofactor metabolism; pyridoxal 5'-phosphate salvage; pyridoxal 5'-phosphate from pyridoxine 5'-phosphate: step 1/1. Its function is as follows. Catalyzes the oxidation of either pyridoxine 5'-phosphate (PNP) or pyridoxamine 5'-phosphate (PMP) into pyridoxal 5'-phosphate (PLP). The protein is Pyridoxine/pyridoxamine 5'-phosphate oxidase of Pelagibacter ubique (strain HTCC1062).